Consider the following 348-residue polypeptide: Dihydroorotase (348 aa).

Zn(2+) is bound by residues histidine 14 and histidine 16. Substrate is bound by residues 16–18 and asparagine 42; that span reads HLR. Residues lysine 100, histidine 137, and histidine 175 each coordinate Zn(2+). At lysine 100 the chain carries N6-carboxylysine. Histidine 137 contacts substrate. Substrate is bound at residue leucine 220. Aspartate 248 contributes to the Zn(2+) binding site. Aspartate 248 is a catalytic residue. Residues histidine 252 and alanine 264 each coordinate substrate.

It belongs to the metallo-dependent hydrolases superfamily. DHOase family. Class II DHOase subfamily. Homodimer. The cofactor is Zn(2+).

It carries out the reaction (S)-dihydroorotate + H2O = N-carbamoyl-L-aspartate + H(+). Its pathway is pyrimidine metabolism; UMP biosynthesis via de novo pathway; (S)-dihydroorotate from bicarbonate: step 3/3. Catalyzes the reversible cyclization of carbamoyl aspartate to dihydroorotate. This chain is Dihydroorotase, found in Pseudomonas entomophila (strain L48).